A 1272-amino-acid chain; its full sequence is Fused isobutyryl-CoA mutase (1272 aa).

The B12-binding domain occupies 20–158; the sequence is RLRFVTAAAL…ARCAEGARAA (139 aa). Histidine 33 contacts adenosylcob(III)alamin. The interval 163-536 is GTPase chaperone MeaI; it reads ESQVGAWAAE…YRHVAEALRK (374 aa). Residues 193–240 are disordered; it reads GAVARNPSSEASRVAAAGRGDHLDRGVRAASTADTADTANTANTANTA. Over residues 221 to 240 the composition is skewed to low complexity; that stretch reads AASTADTADTANTANTANTA. Residue 334–339 participates in GTP binding; that stretch reads GAGKSS. The Mg(2+) site is built by serine 338, isoleucine 363, aspartate 364, and aspartate 377. Arginine 380 is a GTP binding site. Mg(2+) is bound by residues glutamate 429 and threonine 430. 476–479 provides a ligand contact to GTP; that stretch reads NKFD. The linker stretch occupies residues 537–758; it reads HGLRSGGGRL…MLDNLPGYFP (222 aa). Low complexity-rich tracts occupy residues 614–631 and 639–663; these read TVATSASPGASASSKANA and ANASPGANTTANSNASATSGTATPT. The disordered stretch occupies residues 614–667; the sequence is TVATSASPGASASSKANACTSTSSKANASPGANTTANSNASATSGTATPTDALN. Residues phenylalanine 766, arginine 801, arginine 907, tyrosine 951, serine 1000, arginine 1035, and lysine 1040 each coordinate substrate. The GTP site is built by glutamate 1152 and asparagine 1271.

It belongs to the IcmF family. In terms of assembly, homodimer. Adenosylcob(III)alamin is required as a cofactor. The cofactor is Mg(2+).

It catalyses the reaction 2-methylpropanoyl-CoA = butanoyl-CoA. The catalysed reaction is GTP + H2O = GDP + phosphate + H(+). Its function is as follows. Catalyzes the reversible interconversion of isobutyryl-CoA and n-butyryl-CoA, using radical chemistry. Also exhibits GTPase activity, associated with its G-protein domain (MeaI) that functions as a chaperone that assists cofactor delivery and proper holo-enzyme assembly. Does not exhibit methylmalonyl-CoA mutase (MCM) activity. This Paraburkholderia xenovorans (strain LB400) protein is Fused isobutyryl-CoA mutase.